A 456-amino-acid polypeptide reads, in one-letter code: Dolichyl-diphosphooligosaccharide--protein glycosyltransferase 48 kDa subunit (456 aa).

The signal sequence occupies residues 1–42 (MGYFRCARAGSFGRRRKMEPSTAARAWALFWLLLPLLGAVCA). Residues 43 to 427 (SGPRTLVLLD…YERFIPSAYP (385 aa)) are Lumenal-facing. A helical membrane pass occupies residues 428 to 447 (YYASAFSMMLGLFIFSIVFL). Topologically, residues 448-456 (HMKEKEKSD) are cytoplasmic.

The protein belongs to the DDOST 48 kDa subunit family. As to quaternary structure, component of the oligosaccharyltransferase (OST) complex. OST exists in two different complex forms which contain common core subunits RPN1, RPN2, OST48, OST4, DAD1 and TMEM258, either STT3A or STT3B as catalytic subunits, and form-specific accessory subunits. STT3A complex assembly occurs through the formation of 3 subcomplexes. Subcomplex 1 contains RPN1 and TMEM258, subcomplex 2 contains the STT3A-specific subunits STT3A, DC2/OSTC, and KCP2 as well as the core subunit OST4, and subcomplex 3 contains RPN2, DAD1, and OST48. The STT3A complex can form stable complexes with the Sec61 complex or with both the Sec61 and TRAP complexes. Interacts with SMIM22.

The protein resides in the endoplasmic reticulum membrane. It participates in protein modification; protein glycosylation. Subunit of the oligosaccharyl transferase (OST) complex that catalyzes the initial transfer of a defined glycan (Glc(3)Man(9)GlcNAc(2) in eukaryotes) from the lipid carrier dolichol-pyrophosphate to an asparagine residue within an Asn-X-Ser/Thr consensus motif in nascent polypeptide chains, the first step in protein N-glycosylation. N-glycosylation occurs cotranslationally and the complex associates with the Sec61 complex at the channel-forming translocon complex that mediates protein translocation across the endoplasmic reticulum (ER). All subunits are required for a maximal enzyme activity. Required for the assembly of both SST3A- and SS3B-containing OST complexes. This is Dolichyl-diphosphooligosaccharide--protein glycosyltransferase 48 kDa subunit from Homo sapiens (Human).